The following is a 388-amino-acid chain: Branched-chain-amino-acid aminotransferase 2, chloroplastic (388 aa).

Residues 1–22 (MIKTITSLRKTLVLPLHLHIRT) constitute a chloroplast transit peptide. At lysine 235 the chain carries N6-(pyridoxal phosphate)lysine.

This sequence belongs to the class-IV pyridoxal-phosphate-dependent aminotransferase family. Pyridoxal 5'-phosphate is required as a cofactor.

The protein localises to the plastid. The protein resides in the chloroplast. It carries out the reaction L-leucine + 2-oxoglutarate = 4-methyl-2-oxopentanoate + L-glutamate. The enzyme catalyses L-isoleucine + 2-oxoglutarate = (S)-3-methyl-2-oxopentanoate + L-glutamate. It catalyses the reaction L-valine + 2-oxoglutarate = 3-methyl-2-oxobutanoate + L-glutamate. It participates in amino-acid biosynthesis; L-isoleucine biosynthesis; L-isoleucine from 2-oxobutanoate: step 4/4. It functions in the pathway amino-acid biosynthesis; L-leucine biosynthesis; L-leucine from 3-methyl-2-oxobutanoate: step 4/4. Its pathway is amino-acid biosynthesis; L-valine biosynthesis; L-valine from pyruvate: step 4/4. Its function is as follows. Converts 2-oxo acids to branched-chain amino acids. Shows activity with L-Leu, L-Ile and L-Val as amino donors and 2-oxoglutarate as an amino acceptor, but no activity for D-isomers of Leu, Ile, Val, Asp, Glu or Ala. The protein is Branched-chain-amino-acid aminotransferase 2, chloroplastic (BCAT2) of Arabidopsis thaliana (Mouse-ear cress).